The following is a 146-amino-acid chain: 3-hydroxyacyl-[acyl-carrier-protein] dehydratase FabZ (146 aa).

Histidine 48 is a catalytic residue.

Belongs to the thioester dehydratase family. FabZ subfamily.

Its subcellular location is the cytoplasm. It catalyses the reaction a (3R)-hydroxyacyl-[ACP] = a (2E)-enoyl-[ACP] + H2O. Involved in unsaturated fatty acids biosynthesis. Catalyzes the dehydration of short chain beta-hydroxyacyl-ACPs and long chain saturated and unsaturated beta-hydroxyacyl-ACPs. The polypeptide is 3-hydroxyacyl-[acyl-carrier-protein] dehydratase FabZ (Teredinibacter turnerae (strain ATCC 39867 / T7901)).